A 150-amino-acid polypeptide reads, in one-letter code: MKVIFLADVKGKGKRGEVKEVSTGYAQNFLIKKNLAKEATKQAINELKGKQKSEEKAQAELLAEAKAVKVKLEQESTLVQFSEKVGPDGRTFGSITSKKISEELNKQFGIKLDKRYIKLDHPIRTIGLIEIPVKLHKDIDGIIKLQIKEA.

It belongs to the bacterial ribosomal protein bL9 family.

Functionally, binds to the 23S rRNA. The chain is Large ribosomal subunit protein bL9 from Streptococcus mutans serotype c (strain ATCC 700610 / UA159).